Consider the following 378-residue polypeptide: MKHSVHFGAGNIGRGFIGEILFKNDFHIDFVDVNNQIIHALNEKGKYEIEIAQKGQSRIEVTNVAGINSKEHPEQVIEAIQKTDIITTAIGPNILPFIAELLAKGIEARRVAGNTQALDVMACENMIGGSQFLYQEVKKYLSPEGLTFADNYIGFPNAAVDRIVPTQSHEDSLFVMVEPFNEWVVETKRLKNPDLRLEDVHYEEDLEPFIERKLFSVNSGHATSAYIGAHYGAKTILEALQNPNIKSRIESVLAEIRSLLIAKWNFDKKELENYHKVIIERFENPFIVDEVSRVARTPIRKLGYNERFIRPIRELKELSLSYKNLLKTVGYAFDYRDVNDEESIRLGELLAKQSVKDVVIQVTGLDDQELIEQIVEYI.

An NAD(+)-binding site is contributed by 4-15; that stretch reads SVHFGAGNIGRG.

The protein belongs to the mannitol dehydrogenase family.

It carries out the reaction D-mannitol 1-phosphate + NAD(+) = beta-D-fructose 6-phosphate + NADH + H(+). The polypeptide is Mannitol-1-phosphate 5-dehydrogenase (Streptococcus pneumoniae (strain JJA)).